Consider the following 131-residue polypeptide: uncharacterized protein (131 aa).

Residues 1 to 67 (MCSARKLLRG…HSGEPIGDDY (67 aa)) are disordered. Ser14 is modified (phosphoserine). The chain crosses the membrane as a helical span at residues 99-119 (VVVLFFWLMLWFLGLQALGLV).

It belongs to the FAM241 family.

It localises to the membrane. This is an uncharacterized protein from Mus musculus (Mouse).